The following is a 183-amino-acid chain: Peptidoglycan recognition protein 1 (183 aa).

An N-terminal signal peptide occupies residues 1 to 17; the sequence is MLFAWAPFPALLGLADS. 3 cysteine pairs are disulfide-bonded: C18-C142, C34-C79, and C55-C61. Residues 40 to 168 form the N-acetylmuramoyl-L-alanine amidase domain; that stretch reads KPVRYVVISH…RDVQSTLSPG (129 aa).

The protein belongs to the N-acetylmuramoyl-L-alanine amidase 2 family. As to expression, expressed in all regions of the brain.

It localises to the secreted. It is found in the cytoplasmic granule. In terms of biological role, innate immunity protein that plays several important functions in antimicrobial and antitumor defense systems. Acts as a pattern receptor that binds to murein peptidoglycans (PGN) of Gram-positive bacteria and thus provides bactericidal activity. Forms an equimolar complex with heat shock protein HSPA1A and induces programmed cell death through apoptosis and necroptosis in tumor cell lines by activating the TNFR1 receptor on the target cell membrane. In addition, acts in complex with the Ca(2+)-binding protein S100A4 as a chemoattractant able to induce lymphocyte movement. Mechanistically, this complex acts as a ligand of the chemotactic receptors CCR5 and CXCR3 which are present on the cells of the immune system. Promotes also the activation of lymphocytes that become able to kill virus-infected cells as well as tumor cells by modulating the spectrum of their target-cell specificity. Induction of cytotoxicity on monocyte surface requires interaction with TREM1 receptor. The polypeptide is Peptidoglycan recognition protein 1 (Pglyrp1) (Rattus norvegicus (Rat)).